The primary structure comprises 115 residues: Cyclin-dependent kinase 2-associated protein 1 (115 aa).

The interaction with CDK2AP2 stretch occupies residues 20–25 (GSVHSP). Ser46 is modified (phosphoserine; by IKKE).

Belongs to the CDK2AP family. Homodimer. Component of the nucleosome remodeling and deacetylase (NuRD) repressor complex, composed of core proteins MTA1, MTA2, MTA3, RBBP4, RBBP7, HDAC1, HDAC2, MBD2, MBD3, and peripherally associated proteins CDK2AP1, CDK2AP2, GATAD2A, GATAD2B, CHD3, CHD4 and CHD5. The exact stoichiometry of the NuRD complex is unknown, and some subunits such as MBD2 and MBD3, GATAD2A and GATAD2B, and CHD3, CHD4 and CHD5 define mutually exclusive NuRD complexes. Interacts with monomeric unphosphorylated CDK2. Interacts with CDK2AP2. Interacts with GATAD2A. Interacts with HDAC1. Interacts with HDAC2. Interacts with MBD2. Interacts with MBD3. Interacts with RBBP4. Interacts with RBBP7. Post-translationally, phosphorylated in vitro by IKBKE at Ser-46.

The protein localises to the nucleus. Its subcellular location is the chromosome. Its function is as follows. Inhibitor of cyclin-dependent kinase CDK2. Also acts as a component of the histone deacetylase NuRD complex which participates in the remodeling of chromatin. This Homo sapiens (Human) protein is Cyclin-dependent kinase 2-associated protein 1 (CDK2AP1).